The following is a 230-amino-acid chain: MKDLPIIALDFESKEKVNQFLDLFDESLFVKVGMELFYQEGPQLINEIKERGHDVFLDLKLHDIPNTVGKAMEGLAKLNVDLVNVHAAGGVKMMSEAIKGLRKHNQDTKIIAVTQLTSTTEDMLRHEQNIQTSIEEAVLNYAKLANAAGLDGVVCSPLESRMLTEKLGTSFLKVTPGIRPKGASQNDQHRITTPEEARQLGSTHIVVGRPITQSDNPVESYHKIKESWLV.

Residues Asp-10, Lys-31, 58 to 67 (DLKLHDIPNT), Thr-117, Arg-179, Gln-188, Gly-208, and Arg-209 each bind substrate. Lys-60 (proton donor) is an active-site residue.

It belongs to the OMP decarboxylase family. Type 1 subfamily. As to quaternary structure, homodimer.

It carries out the reaction orotidine 5'-phosphate + H(+) = UMP + CO2. The protein operates within pyrimidine metabolism; UMP biosynthesis via de novo pathway; UMP from orotate: step 2/2. Catalyzes the decarboxylation of orotidine 5'-monophosphate (OMP) to uridine 5'-monophosphate (UMP). The polypeptide is Orotidine 5'-phosphate decarboxylase (Staphylococcus aureus (strain USA300)).